A 415-amino-acid polypeptide reads, in one-letter code: Gamma-glutamyl phosphate reductase (415 aa).

The protein belongs to the gamma-glutamyl phosphate reductase family.

The protein resides in the cytoplasm. It catalyses the reaction L-glutamate 5-semialdehyde + phosphate + NADP(+) = L-glutamyl 5-phosphate + NADPH + H(+). The protein operates within amino-acid biosynthesis; L-proline biosynthesis; L-glutamate 5-semialdehyde from L-glutamate: step 2/2. Its function is as follows. Catalyzes the NADPH-dependent reduction of L-glutamate 5-phosphate into L-glutamate 5-semialdehyde and phosphate. The product spontaneously undergoes cyclization to form 1-pyrroline-5-carboxylate. The sequence is that of Gamma-glutamyl phosphate reductase from Listeria innocua serovar 6a (strain ATCC BAA-680 / CLIP 11262).